Reading from the N-terminus, the 674-residue chain is Bacterioopsin transcriptional activator (674 aa).

Residues 19–131 enclose the Response regulatory domain; that stretch reads GVLFAGSDPE…DATAAIADRI (113 aa). A PAS domain is found at 156–229; sequence ERRLKEQALD…AEFWTAITED (74 aa). A PAC domain is found at 230-284; the sequence is HDTQVVLRNYRRDGSLFWNQVDISPIYDEDGTVSHYVGFQMDVSERMAAQQELQG. Positions 285–454 constitute a GAF domain; sequence ERQSLDRLLD…NDALTRRTIA (170 aa). The 52-residue stretch at 617–668 folds into the HTH bat-type domain; it reads LTDRQLTALQKAYVSGYFEWPRRAEGKQLAESMDIVPSTYHQHLQAAKQKLV.

Functionally, involved in activating bop (bacterioopsin) and brp gene expression at low-oxygen tension, which naturally occurs in stationary phase. The chain is Bacterioopsin transcriptional activator (bat) from Halobacterium salinarum (strain ATCC 700922 / JCM 11081 / NRC-1) (Halobacterium halobium).